We begin with the raw amino-acid sequence, 229 residues long: Claudin-25 (229 aa).

Residues 1–10 are Cytoplasmic-facing; sequence MAWSFRAKVQ. A helical transmembrane segment spans residues 11-31; sequence LGGLLLSLLGWVCSCVTTILP. Residues 32–81 lie on the Extracellular side of the membrane; that stretch reads QWKTLNLELNEMETWIMGIWEVCVDREEVATVCKAFESFLSLPQELQVAR. A helical membrane pass occupies residues 82–102; sequence ILMVASHGLGLLGLLLCSFGS. Topologically, residues 103–124 are cytoplasmic; sequence ECFQFHRIRWVFKRRLGLLGRT. The chain crosses the membrane as a helical span at residues 125-145; the sequence is LEASASATTLLPVSWVAHATI. At 146–164 the chain is on the extracellular side; it reads QDFWDDSIPDIIPRWEFGG. A helical transmembrane segment spans residues 165-185; it reads ALYLGWAAGIFLALGGLLLIF. Residues 186-229 are Cytoplasmic-facing; it reads SACLGKEDVPFPLMAGPTVPLSCAPVEESDGSFHLMLRPRNLVI.

Belongs to the claudin family.

It localises to the cell junction. Its subcellular location is the tight junction. It is found in the cell membrane. Its function is as follows. Plays a major role in tight junction-specific obliteration of the intercellular space, through calcium-independent cell-adhesion activity. The protein is Claudin-25 (CLDN25) of Homo sapiens (Human).